A 66-amino-acid polypeptide reads, in one-letter code: uncharacterized protein (66 aa).

Positions Met-1 to Ser-18 are enriched in low complexity. The tract at residues Met-1 to Thr-22 is disordered.

This is an uncharacterized protein from Schizosaccharomyces pombe (strain 972 / ATCC 24843) (Fission yeast).